The following is a 424-amino-acid chain: Imidazolonepropionase (424 aa).

Fe(3+)-binding residues include H84 and H86. Positions 84 and 86 each coordinate Zn(2+). R93, Y156, and H189 together coordinate 4-imidazolone-5-propanoate. Y156 serves as a coordination point for N-formimidoyl-L-glutamate. H254 is a Fe(3+) binding site. H254 provides a ligand contact to Zn(2+). E257 is a 4-imidazolone-5-propanoate binding site. Residue D328 participates in Fe(3+) binding. Residue D328 coordinates Zn(2+). The N-formimidoyl-L-glutamate site is built by N330 and G332. S333 provides a ligand contact to 4-imidazolone-5-propanoate.

This sequence belongs to the metallo-dependent hydrolases superfamily. HutI family. Zn(2+) is required as a cofactor. Fe(3+) serves as cofactor.

The protein resides in the cytoplasm. It catalyses the reaction 4-imidazolone-5-propanoate + H2O = N-formimidoyl-L-glutamate. It participates in amino-acid degradation; L-histidine degradation into L-glutamate; N-formimidoyl-L-glutamate from L-histidine: step 3/3. Catalyzes the hydrolytic cleavage of the carbon-nitrogen bond in imidazolone-5-propanoate to yield N-formimidoyl-L-glutamate. It is the third step in the universal histidine degradation pathway. The sequence is that of Imidazolonepropionase from Geobacillus sp. (strain WCH70).